Reading from the N-terminus, the 613-residue chain is Glutamyl-tRNA(Gln) amidotransferase subunit E (613 aa).

It belongs to the GatB/GatE family. GatE subfamily. Heterodimer of GatD and GatE.

The catalysed reaction is L-glutamyl-tRNA(Gln) + L-glutamine + ATP + H2O = L-glutaminyl-tRNA(Gln) + L-glutamate + ADP + phosphate + H(+). Its function is as follows. Allows the formation of correctly charged Gln-tRNA(Gln) through the transamidation of misacylated Glu-tRNA(Gln) in organisms which lack glutaminyl-tRNA synthetase. The reaction takes place in the presence of glutamine and ATP through an activated gamma-phospho-Glu-tRNA(Gln). The GatDE system is specific for glutamate and does not act on aspartate. The chain is Glutamyl-tRNA(Gln) amidotransferase subunit E from Archaeoglobus fulgidus (strain ATCC 49558 / DSM 4304 / JCM 9628 / NBRC 100126 / VC-16).